The sequence spans 415 residues: Multidrug resistance protein MdtA (415 aa).

Positions 1–21 (MKGSYKSRWVIVIVVVIAAIA) are cleaved as a signal peptide. Disordered stretches follow at residues 32–60 (SRSAAPGATKQAQQSPAGGRRGMRSGPLA) and 392–415 (EAQSATTPEEKATSREYAKKGARS). Basic and acidic residues predominate over residues 399 to 415 (PEEKATSREYAKKGARS).

The protein belongs to the membrane fusion protein (MFP) (TC 8.A.1) family. As to quaternary structure, part of a tripartite efflux system composed of MdtA, MdtB and MdtC.

The protein localises to the cell inner membrane. The MdtABC tripartite complex confers resistance against novobiocin and deoxycholate. This Escherichia coli (strain 55989 / EAEC) protein is Multidrug resistance protein MdtA.